Reading from the N-terminus, the 62-residue chain is MTTSNTKVKLQLVRSLIGTRESHRATVRGLGLGRINSVSELEDTPAVRGMINKVSYLVKVIG.

The protein belongs to the universal ribosomal protein uL30 family. In terms of assembly, part of the 50S ribosomal subunit.

This chain is Large ribosomal subunit protein uL30, found in Polynucleobacter asymbioticus (strain DSM 18221 / CIP 109841 / QLW-P1DMWA-1) (Polynucleobacter necessarius subsp. asymbioticus).